A 254-amino-acid chain; its full sequence is Sugar fermentation stimulation protein homolog (254 aa).

Belongs to the SfsA family.

The protein is Sugar fermentation stimulation protein homolog of Parasynechococcus marenigrum (strain WH8102).